A 354-amino-acid chain; its full sequence is Chorismate synthase (354 aa).

R48 is an NADP(+) binding site. FMN-binding positions include 125 to 127 (RAS), G277, 292 to 296 (KPIPS), and R318.

The protein belongs to the chorismate synthase family. As to quaternary structure, homotetramer. It depends on FMNH2 as a cofactor.

It catalyses the reaction 5-O-(1-carboxyvinyl)-3-phosphoshikimate = chorismate + phosphate. It participates in metabolic intermediate biosynthesis; chorismate biosynthesis; chorismate from D-erythrose 4-phosphate and phosphoenolpyruvate: step 7/7. Its function is as follows. Catalyzes the anti-1,4-elimination of the C-3 phosphate and the C-6 proR hydrogen from 5-enolpyruvylshikimate-3-phosphate (EPSP) to yield chorismate, which is the branch point compound that serves as the starting substrate for the three terminal pathways of aromatic amino acid biosynthesis. This reaction introduces a second double bond into the aromatic ring system. The protein is Chorismate synthase of Nitratidesulfovibrio vulgaris (strain DP4) (Desulfovibrio vulgaris).